Reading from the N-terminus, the 208-residue chain is Large ribosomal subunit protein bL25 (208 aa).

Belongs to the bacterial ribosomal protein bL25 family. CTC subfamily. In terms of assembly, part of the 50S ribosomal subunit; part of the 5S rRNA/L5/L18/L25 subcomplex. Contacts the 5S rRNA. Binds to the 5S rRNA independently of L5 and L18.

In terms of biological role, this is one of the proteins that binds to the 5S RNA in the ribosome where it forms part of the central protuberance. This Bordetella pertussis (strain Tohama I / ATCC BAA-589 / NCTC 13251) protein is Large ribosomal subunit protein bL25.